The chain runs to 142 residues: Baculoviral IAP repeat-containing protein 5 (142 aa).

Residues 18–88 form a BIR repeat; it reads RISTFKNWPF…KHSSGCAFLS (71 aa). Serine 20 carries the post-translational modification Phosphoserine; by AURKC. The residue at position 23 (lysine 23) is an N6-acetyllysine. Threonine 34 is modified (phosphothreonine; by CDK1 and CDK15). Threonine 48 bears the Phosphothreonine mark. Residues cysteine 57, cysteine 60, histidine 77, and cysteine 84 each contribute to the Zn(2+) site. An N6-acetyllysine mark is found at lysine 90, lysine 110, lysine 112, and lysine 115. At threonine 117 the chain carries Phosphothreonine; by AURKB. Lysine 129 carries the N6-acetyllysine modification.

The protein belongs to the IAP family. Monomer or homodimer. Exists as a homodimer in the apo state and as a monomer in the CPC-bound state. The monomer protects cells against apoptosis more efficiently than the dimer. Only the dimeric form is capable of enhancing tubulin stability in cells. When phosphorylated, interacts with LAMTOR5/HBXIP; the resulting complex binds pro-CASP9, as well as active CASP9, but much less efficiently. Component of the chromosomal passenger complex (CPC) composed of at least BIRC5/survivin, CDCA8/borealin, INCENP, AURKB or AURKC; in the complex forms a triple-helix bundle-based subcomplex with INCENP and CDCA8. Interacts with JTB. Interacts (via BIR domain) with histone H3 phosphorylated at 'Thr-3' (H3pT3). Interacts with EVI5. Interacts with GTP-bound RAN in both the S and M phases of the cell cycle. Interacts with USP9X. Interacts with tubulin. Interacts with BIRC2/c-IAP1. The acetylated form at Lys-129 interacts with STAT3. The monomeric form deacetylated at Lys-129 interacts with XPO1/CRM1. The monomeric form interacts with XIAP/BIRC4. Both the dimeric and monomeric form can interact with DIABLO/SMAC. Interacts with BIRC6/bruce. Interacts with FBXL7; this interaction facilitates the polyubiquitination and subsequent proteasomal degradation of BIRC5 by the SCF(FBXL7) E3 ubiquitin-protein ligase complex. Post-translationally, ubiquitinated by the Cul9-RING ubiquitin-protein ligase complex, leading to its degradation. Ubiquitination is required for centrosomal targeting. Deubiquitinated by USP35 or USP38; leading to stabilization. Acetylation at Lys-129 results in its homodimerization, while deacetylation promotes the formation of monomers which heterodimerize with XPO1/CRM1 which facilitates its nuclear export. The acetylated form represses STAT3 transactivation. The dynamic equilibrium between its acetylation and deacetylation at Lys-129 determines its interaction with XPO1/CRM1, its subsequent subcellular localization, and its ability to inhibit STAT3 transactivation. In terms of processing, in vitro phosphorylation at Thr-117 by AURKB prevents interaction with INCENP and localization to mitotic chromosomes. Phosphorylation at Thr-48 by CK2 is critical for its mitotic and anti-apoptotic activities. Phosphorylation at Thr-34 by CDK15 is critical for its anti-apoptotic activity. Phosphorylation at Ser-20 by AURKC is critical for regulation of proper chromosome alignment and segregation, and possibly cytokinesis.

Its subcellular location is the cytoplasm. The protein localises to the nucleus. It is found in the chromosome. The protein resides in the centromere. It localises to the cytoskeleton. Its subcellular location is the spindle. The protein localises to the kinetochore. It is found in the midbody. In terms of biological role, multitasking protein that has dual roles in promoting cell proliferation and preventing apoptosis. Component of a chromosome passage protein complex (CPC) which is essential for chromosome alignment and segregation during mitosis and cytokinesis. Acts as an important regulator of the localization of this complex; directs CPC movement to different locations from the inner centromere during prometaphase to midbody during cytokinesis and participates in the organization of the center spindle by associating with polymerized microtubules. Involved in the recruitment of CPC to centromeres during early mitosis via association with histone H3 phosphorylated at 'Thr-3' (H3pT3) during mitosis. The complex with RAN plays a role in mitotic spindle formation by serving as a physical scaffold to help deliver the RAN effector molecule TPX2 to microtubules. May counteract a default induction of apoptosis in G2/M phase. The acetylated form represses STAT3 transactivation of target gene promoters. May play a role in neoplasia. Inhibitor of CASP3 and CASP7. Essential for the maintenance of mitochondrial integrity and function. This chain is Baculoviral IAP repeat-containing protein 5 (BIRC5), found in Pongo abelii (Sumatran orangutan).